The sequence spans 910 residues: p53-induced death domain-containing protein 1 (910 aa).

Positions 1 to 25 are disordered; sequence MAATVEGPELEAAAAAGDASEDSDA. An N-acetylalanine modification is found at A2. 7 LRR repeats span residues 126–147, 149–171, 172–194, 195–216, 218–240, 241–263, and 264–285; these read HLAH…VLQM, GLGA…GALP, ALTF…GALS, TLQR…IGGL, SLLE…AGLR, SLRL…ARLP, and LLTR…LLDA. 2 positions are modified to phosphoserine: S299 and S305. ZU5 domains lie at 322-454 and 455-596; these read DLDS…VSRP and VSNA…WYTT. Peptidase S68 regions lie at residues 423 to 452 and 566 to 594; these read DLET…LVVS and DITA…WLWY. Residues H444, S446, H586, and S588 contribute to the active site. The segment at 580 to 716 is UPA domain; that stretch reads ARFQVTHFSW…TTTLDREAQA (137 aa). The Death domain occupies 788 to 873; it reads TQSNLLSVAG…DVAEEVRAVL (86 aa). A disordered region spans residues 884 to 910; that stretch reads IRRMGLAPKDPALPGSSAPQPPEPAQA.

In terms of assembly, forms a complex named the PIDDosome with CASP2 and CRADD. Forms a complex with IKBKG and RIPK1. Interacts with FADD and MADD. Undergoes autoproteolytic processing whose extent either directs cells towards survival or apoptotic pathways. Autoproteolytically cleaved into two main fragments PIDD-N and PIDD-C. PIDD-C can be further processed into PIDD-CC, a processing which is enhanced by DNA damage. The cleavage producing PIDD-C is required for translocation of PIDD1 to the nucleus upon DNA damage and activation of NF-kappa-B. PIDD-CC mediates the interaction with CRADD and the cleavage producing PIDD-CC is required for the activation of CASP2. PIDD-N remains associated with PIDD-C and PIDD-CC after cleavage. Ubiquitous.

It localises to the cytoplasm. It is found in the nucleus. Component of the DNA damage/stress response pathway that functions downstream of p53/TP53 and can either promote cell survival or apoptosis. Associated with CRADD and the CASP2 caspase, it forms the PIDDosome a complex that activates CASP2 and triggers apoptosis. Associated with IKBKG and RIPK1, it enhances sumoylation and ubiquitination of IKBKG which is important for activation of the transcription factor NF-kappa-B. In Homo sapiens (Human), this protein is p53-induced death domain-containing protein 1.